The following is a 1141-amino-acid chain: Probable ubiquitin carboxyl-terminal hydrolase 2 (1141 aa).

Thr-112 carries the phosphothreonine modification. The residue at position 113 (Ser-113) is a Phosphoserine. Thr-115 is subject to Phosphothreonine. Residues 614-1124 enclose the USP domain; sequence IGLENTGNLC…NPYMLTYIRK (511 aa). The active-site Nucleophile is the Cys-623. Thr-721 carries the post-translational modification Phosphothreonine. Residue Ser-722 is modified to Phosphoserine. Positions 748–770 are disordered; the sequence is EEQAQGLEQEQGQDEAKSPAEQS. The active-site Proton acceptor is His-1076.

It belongs to the peptidase C19 family.

It catalyses the reaction Thiol-dependent hydrolysis of ester, thioester, amide, peptide and isopeptide bonds formed by the C-terminal Gly of ubiquitin (a 76-residue protein attached to proteins as an intracellular targeting signal).. The polypeptide is Probable ubiquitin carboxyl-terminal hydrolase 2 (ubp2) (Schizosaccharomyces pombe (strain 972 / ATCC 24843) (Fission yeast)).